The following is a 75-amino-acid chain: uncharacterized protein (75 aa).

Residues C43–C67 form a dksA C4-type zinc finger.

This is an uncharacterized protein from Haemophilus influenzae (strain ATCC 51907 / DSM 11121 / KW20 / Rd).